The following is a 51-amino-acid chain: Probable antitoxin PhoAT (51 aa).

This sequence belongs to the PhoAT antitoxin family. As to quaternary structure, interacts with toxin PhoH2.

In terms of biological role, antitoxin component of a type II toxin-antitoxin (TA) system. The cognate antitoxin is PhoAT; the toxin gene cannot be expressed in the absence of the antitoxin gene in M.smegmatis (strain mc(2)4517), and abrogates the toxic effects of PhoH2 in M.smegmatis strain mc(2)155. The chain is Probable antitoxin PhoAT from Mycobacterium tuberculosis (strain ATCC 25618 / H37Rv).